Reading from the N-terminus, the 533-residue chain is Probable intron-encoded endonuclease 3 (533 aa).

3 consecutive transmembrane segments (helical) span residues 1-21 (MYLSIIILPLLGSIVAGFFGR), 30-50 (LITCLSVIITTGLAILAFFEV), and 81-101 (LTVAMLIPVLIISSLVHIYSI). Positions 1–108 (MYLSIIILPL…YSISYMSHDP (108 aa)) are ndh-5 exon 1 encoded. Residues 109-533 (RGRVRGKRVY…SISLLLGRRR (425 aa)) form a ndh-5 intron 1 encoded region.

This sequence in the N-terminal section; belongs to the complex I subunit 5 family. It in the C-terminal section; belongs to the LAGLIDADG endonuclease family.

The protein localises to the mitochondrion membrane. In terms of biological role, mitochondrial DNA endonuclease involved in intron homing. This chain is Probable intron-encoded endonuclease 3, found in Neurospora crassa (strain ATCC 24698 / 74-OR23-1A / CBS 708.71 / DSM 1257 / FGSC 987).